The following is a 254-amino-acid chain: DNA-3-methyladenine glycosylase (254 aa).

The segment covering 1 to 10 (MKTPARRSKR) has biased composition (basic residues). The disordered stretch occupies residues 1 to 20 (MKTPARRSKRVNQEESETNV).

This sequence belongs to the DNA glycosylase MPG family.

Its subcellular location is the nucleus. The catalysed reaction is Hydrolysis of alkylated DNA, releasing 3-methyladenine, 3-methylguanine, 7-methylguanine and 7-methyladenine.. In terms of biological role, hydrolysis of the deoxyribose N-glycosidic bond to excise 3-methyladenine, and 7-methylguanine from the damaged DNA polymer formed by alkylation lesions. The polypeptide is DNA-3-methyladenine glycosylase (MAG) (Arabidopsis thaliana (Mouse-ear cress)).